The primary structure comprises 290 residues: Picrinine-N-methytransferase TMT4 (290 aa).

The tract at residues 71–80 (MLDVGCGIGG) is SAM motif I. Positions 133-139 (DGTFDVV) match the Vacuolar targeting signal motif. An SAM motif II region spans residues 134 to 142 (GTFDVVFTI). Positions 161–170 (VAAPGAAIVI) are SAM motif III.

The protein belongs to the class I-like SAM-binding methyltransferase superfamily. gTMT family. As to quaternary structure, homodimer.

The protein resides in the vacuole membrane. It carries out the reaction picrinine + S-adenosyl-L-methionine = ervincine + S-adenosyl-L-homocysteine + H(+). It functions in the pathway alkaloid biosynthesis; vindoline biosynthesis. Its function is as follows. S-adenosyl-L-methionine-dependent N-methyltransferase involved in the biosynthesis of biologically active monoterpenoid indole alkaloids (MIAs) natural products including vindoline. Catalyzes the conversion of picrinine to N-methylpicrinine (ervincine). The chain is Picrinine-N-methytransferase TMT4 from Catharanthus roseus (Madagascar periwinkle).